The following is a 336-amino-acid chain: Cytoskeleton protein RodZ (336 aa).

The Cytoplasmic portion of the chain corresponds to 1–111 (MNTEATHDQN…LGKRRKKRDG (111 aa)). The 53-residue stretch at 19 to 71 (LRNAREQLGLSQQAVAERLCLKVSTVRDIEEDKAPSDLASTFLRGYIRSYARL) folds into the HTH cro/C1-type domain. Positions 30–49 (QQAVAERLCLKVSTVRDIEE) form a DNA-binding region, H-T-H motif. A helical; Signal-anchor for type II membrane protein membrane pass occupies residues 112–132 (WLMSFTWLVLFVVVGLTGAWW). The Periplasmic portion of the chain corresponds to 133–336 (WQNHKAQQEE…TLNAEPTPAQ (204 aa)). The segment at 155 to 243 (NADKDSGQSV…PSALPTSQAG (89 aa)) is disordered. Residues 161 to 175 (GQSVPLDTGAVTSQD) are compositionally biased toward polar residues. Composition is skewed to low complexity over residues 176–214 (TTPA…VVAP) and 221–243 (TAAT…SQAG).

The protein belongs to the RodZ family.

It is found in the cell inner membrane. In terms of biological role, cytoskeletal protein that is involved in cell-shape control through regulation of the length of the long axis. The chain is Cytoskeleton protein RodZ from Salmonella newport (strain SL254).